We begin with the raw amino-acid sequence, 119 residues long: Large ribosomal subunit protein bL20 (119 aa).

It belongs to the bacterial ribosomal protein bL20 family.

Functionally, binds directly to 23S ribosomal RNA and is necessary for the in vitro assembly process of the 50S ribosomal subunit. It is not involved in the protein synthesizing functions of that subunit. The protein is Large ribosomal subunit protein bL20 of Azorhizobium caulinodans (strain ATCC 43989 / DSM 5975 / JCM 20966 / LMG 6465 / NBRC 14845 / NCIMB 13405 / ORS 571).